Consider the following 646-residue polypeptide: Protein real-time (646 aa).

The PRELI/MSF1 domain occupies 2 to 175 (VQKYESPVRI…FINELKKEGI (174 aa)). The 178-residue stretch at 294–471 (TPVVVEKYFP…FLGGSCITMI (178 aa)) folds into the CRAL-TRIO domain. Residues 499–646 (HHGLYKSVDL…GFSSNSLQSR (148 aa)) enclose the GOLD domain.

It localises to the mitochondrion. The polypeptide is Protein real-time (Aedes aegypti (Yellowfever mosquito)).